Here is a 226-residue protein sequence, read N- to C-terminus: N-(5'-phosphoribosyl)anthranilate isomerase (226 aa).

This sequence belongs to the TrpF family.

It carries out the reaction N-(5-phospho-beta-D-ribosyl)anthranilate = 1-(2-carboxyphenylamino)-1-deoxy-D-ribulose 5-phosphate. Its pathway is amino-acid biosynthesis; L-tryptophan biosynthesis; L-tryptophan from chorismate: step 3/5. The polypeptide is N-(5'-phosphoribosyl)anthranilate isomerase (Synechococcus sp. (strain JA-3-3Ab) (Cyanobacteria bacterium Yellowstone A-Prime)).